We begin with the raw amino-acid sequence, 619 residues long: Chaperone protein HscA homolog (619 aa).

It belongs to the heat shock protein 70 family.

Functionally, chaperone involved in the maturation of iron-sulfur cluster-containing proteins. Has a low intrinsic ATPase activity which is markedly stimulated by HscB. This Haemophilus influenzae (strain PittEE) protein is Chaperone protein HscA homolog.